Reading from the N-terminus, the 1503-residue chain is Rho GTPase-activating protein 5 (1503 aa).

FF domains are found at residues 267–325 (QLVV…HIEQ), 366–420 (KLME…HVQH), 427–481 (RIEM…HQRE), and 482–548 (IVEK…HIGF). 3'-nitrotyrosine is present on Tyr-550. Phosphoserine occurs at positions 590 and 765. Residues 590-763 (STNIDKVNLF…LESVKHNLDV (174 aa)) form the pG1 pseudoGTPase domain. The 166-residue stretch at 779–944 (RIVMCAMCGD…FSDVLEKKNM (166 aa)) folds into the pG2 pseudoGTPase domain. 2 positions are modified to phosphoserine: Ser-951 and Ser-968. Disordered regions lie at residues 975 to 1004 (YNNY…LPTP), 1022 to 1050 (HSTP…PKTN), and 1069 to 1091 (NPRK…SDNY). The span at 1036 to 1045 (VPPPIKPKPV) shows a compositional bias: pro residues. A Phosphoserine modification is found at Ser-1115. Disordered stretches follow at residues 1129–1157 (NTQG…YKYK) and 1169–1255 (YRRT…TRRN). Over residues 1141-1151 (RTSKGHGERRP) the composition is skewed to basic and acidic residues. 3 positions are modified to phosphoserine: Ser-1196, Ser-1203, and Ser-1219. A Rho-GAP domain is found at 1263 to 1450 (MPLQDLVTAE…TFIQQCQFFF (188 aa)).

May interact with RASA1/p120GAP. As to expression, expressed in spinal cord, cerebellum, kidney, testis and lung.

The protein localises to the cytoplasm. It is found in the cell membrane. Its function is as follows. GTPase-activating protein for Rho family members. This Mus musculus (Mouse) protein is Rho GTPase-activating protein 5 (Arhgap5).